Reading from the N-terminus, the 284-residue chain is 2-dehydro-3-deoxyphosphooctonate aldolase (284 aa).

Belongs to the KdsA family.

Its subcellular location is the cytoplasm. The enzyme catalyses D-arabinose 5-phosphate + phosphoenolpyruvate + H2O = 3-deoxy-alpha-D-manno-2-octulosonate-8-phosphate + phosphate. It functions in the pathway carbohydrate biosynthesis; 3-deoxy-D-manno-octulosonate biosynthesis; 3-deoxy-D-manno-octulosonate from D-ribulose 5-phosphate: step 2/3. It participates in bacterial outer membrane biogenesis; lipopolysaccharide biosynthesis. The sequence is that of 2-dehydro-3-deoxyphosphooctonate aldolase from Sodalis glossinidius (strain morsitans).